The sequence spans 71 residues: Heat-stable enterotoxin A (71 aa).

The signal sequence occupies residues 1-19 (MKKIVFVLVLMLSSFGAFG). Positions 20–53 (QETVSGQFSDALSTPITAEVYKQACDPPLPPAEV) are excised as a propeptide. 3 disulfides stabilise this stretch: Cys-59/Cys-64, Cys-60/Cys-68, and Cys-63/Cys-71.

Belongs to the heat-stable enterotoxin family.

The protein localises to the secreted. Its function is as follows. Toxin which activates the particulate form of guanylate cyclase and increases cyclic GMP levels within the host intestinal epithelial cells. This is Heat-stable enterotoxin A (ystA) from Yersinia enterocolitica.